A 663-amino-acid polypeptide reads, in one-letter code: Transmembrane 9 superfamily member 2 (663 aa).

A signal peptide spans 1-28 (MSSRPPASLPARGPRLLLLSLLLLGTVP). At 29–300 (GPRPGSAFYL…LESMPHTHIQ (272 aa)) the chain is on the lumenal side. Residues 301–321 (WFSIMNSLVIVLFLSGMVAMI) traverse the membrane as a helical segment. Residues 322-374 (MLRTLHKDIARYNQMDSTEDAQEEFGWKLVHGDIFRPPRKGMLLSVFLGSGTQ) are Cytoplasmic-facing. Residues 375 to 395 (ILIMTFVTLFFACLGFLSPAN) form a helical membrane-spanning segment. The Lumenal segment spans residues 396-398 (RGA). Residues 399-419 (LMTCAVVLWVLLGTPAGYVAA) form a helical membrane-spanning segment. Residues 420-437 (RFYKSFGGEKWKTNVLLT) lie on the Cytoplasmic side of the membrane. The helical transmembrane segment at 438–458 (SFLCPGIVFADFFIMNLILWG) threads the bilayer. Over 459 to 466 (EGSSAAIP) the chain is Lumenal. A helical membrane pass occupies residues 467–487 (FGTLVAILALWFCISVPLTFI). The Cytoplasmic segment spans residues 488–522 (GAYFGFKKNAIEHPVRTNQIPRQIPEQSFYTKPLP). A helical transmembrane segment spans residues 523 to 543 (GIIMGGILPFGCIFIQLFFIL). The Lumenal segment spans residues 544–554 (NSIWSHQMYYM). A helical transmembrane segment spans residues 555 to 575 (FGFLFLVFIILVITCSEATIL). The Cytoplasmic portion of the chain corresponds to 576 to 591 (LCYFHLCAEDYHWQWR). Residues 592 to 612 (SFLTSGFTAVYFLVYAIHYFF) traverse the membrane as a helical segment. The Lumenal portion of the chain corresponds to 613–631 (SKLQITGTASTILYFGYTM). Residues 632 to 652 (IMVLIFFLFTGTIGFFACFWF) traverse the membrane as a helical segment. The Cytoplasmic portion of the chain corresponds to 653-663 (VTKIYSVVKVD).

Belongs to the nonaspanin (TM9SF) (TC 9.A.2) family.

The protein localises to the endosome membrane. It localises to the golgi outpost. The protein resides in the cytoplasm. It is found in the cytoskeleton. Its subcellular location is the microtubule organizing center. Functionally, in the intracellular compartments, may function as a channel or small molecule transporter. This chain is Transmembrane 9 superfamily member 2 (Tm9sf2), found in Rattus norvegicus (Rat).